We begin with the raw amino-acid sequence, 220 residues long: MHSRLATARLYLCTDARRERGDLADFADAALAGGVDIIQLRDKGSAGEQRFGPLEARDELAACEILADAAARHAAMFAVNDRADIARAARADVLHLGQRDLPVDVARAITGPATLIGQSTHDRDQVSAAAIGAVDYFCVGPCWPTPTKPGRTAPGLDLVRFAADVAGAKPWFAIGGIDGVRLPEVLAAGARRIVVVRAITAADDPREAAAKLKSELLAAI.

Residues 39-43 and Asn-80 each bind 4-amino-2-methyl-5-(diphosphooxymethyl)pyrimidine; that span reads QLRDK. Asp-81 and Asp-100 together coordinate Mg(2+). Ser-119 contributes to the 4-amino-2-methyl-5-(diphosphooxymethyl)pyrimidine binding site. 145–147 lines the 2-[(2R,5Z)-2-carboxy-4-methylthiazol-5(2H)-ylidene]ethyl phosphate pocket; it reads TPT. Lys-148 lines the 4-amino-2-methyl-5-(diphosphooxymethyl)pyrimidine pocket. Gly-176 contacts 2-[(2R,5Z)-2-carboxy-4-methylthiazol-5(2H)-ylidene]ethyl phosphate.

The protein belongs to the thiamine-phosphate synthase family. The cofactor is Mg(2+).

The catalysed reaction is 2-[(2R,5Z)-2-carboxy-4-methylthiazol-5(2H)-ylidene]ethyl phosphate + 4-amino-2-methyl-5-(diphosphooxymethyl)pyrimidine + 2 H(+) = thiamine phosphate + CO2 + diphosphate. It catalyses the reaction 2-(2-carboxy-4-methylthiazol-5-yl)ethyl phosphate + 4-amino-2-methyl-5-(diphosphooxymethyl)pyrimidine + 2 H(+) = thiamine phosphate + CO2 + diphosphate. It carries out the reaction 4-methyl-5-(2-phosphooxyethyl)-thiazole + 4-amino-2-methyl-5-(diphosphooxymethyl)pyrimidine + H(+) = thiamine phosphate + diphosphate. It functions in the pathway cofactor biosynthesis; thiamine diphosphate biosynthesis; thiamine phosphate from 4-amino-2-methyl-5-diphosphomethylpyrimidine and 4-methyl-5-(2-phosphoethyl)-thiazole: step 1/1. In terms of biological role, condenses 4-methyl-5-(beta-hydroxyethyl)thiazole monophosphate (THZ-P) and 2-methyl-4-amino-5-hydroxymethyl pyrimidine pyrophosphate (HMP-PP) to form thiamine monophosphate (TMP). In Mycobacterium marinum (strain ATCC BAA-535 / M), this protein is Thiamine-phosphate synthase.